A 118-amino-acid polypeptide reads, in one-letter code: Large ribosomal subunit protein bL19 (118 aa).

The protein belongs to the bacterial ribosomal protein bL19 family.

In terms of biological role, this protein is located at the 30S-50S ribosomal subunit interface and may play a role in the structure and function of the aminoacyl-tRNA binding site. The polypeptide is Large ribosomal subunit protein bL19 (Salinispora arenicola (strain CNS-205)).